The chain runs to 635 residues: MNYTLNQHYEEKVRPSIDLIDSLRSLGVEKDLALPAIAVIGDQSSGKSSVLEALSGVALPRGSGIVTRCPLELKMKRKKEGEEWHGKISYQDREEEIEDPSDVENKIRKAQDEMAGVGVGISDDLISLEIGSPDVPDLTLIDLPGIARVAVKGQPENIGEQIKRLIRKFITKQETINLVVVPCNVDIATTEALKMAQEVDPDGERTLGILTKPDLVDKGTEETVVDIVHNEVIQLTKGYMIVKCRGQKEIMERVSLTEATEREKAFFKEHAHLSTLYDEGHATIPKLAEKLTLELVQHIEKSMPRLKEQIEEKLEETRTALEKCGTGPPEDPKERLYFLIDKVTLFTQDAINLSTGEELKSGDINVFSTLRTEFGKWKAYVDRSGKNFNKKIEKEVADYEKRYRGRELPGFINYKTFEVIVKDQIKQLEEPAVKKLKELSDAARKAFILLAQNSFTGFPILLKTAKTKIETIKQEKESTAESTLRTQFKMELIVYTQDSTYSSSLKKRKREEEELEEGELVKNNLGSWKGLPVVSVRSTVNGLDTHATLREMMLHLKSYYHIASQRLADQIPMVIRYLVLQEFASQLQREMLQTLQEKDNIEQLLKEDIDIGSKRAALQSKLKRLMKAHNYLVEF.

The Dynamin-type G domain occupies 31–304 (DLALPAIAVI…LVQHIEKSMP (274 aa)). The G1 motif stretch occupies residues 41–48 (GDQSSGKS). GTP is bound at residue 41–48 (GDQSSGKS). The interval 66 to 68 (VTR) is G2 motif. The segment at 142 to 145 (DLPG) is G3 motif. GTP-binding positions include 142–146 (DLPGI) and 211–214 (TKPD). Residues 211–214 (TKPD) are G4 motif. Residues 243 to 246 (KCRG) are G5 motif. One can recognise a GED domain in the interval 549–635 (LREMMLHLKS…MKAHNYLVEF (87 aa)).

The protein belongs to the TRAFAC class dynamin-like GTPase superfamily. Dynamin/Fzo/YdjA family.

It is found in the nucleus. The protein resides in the cytoplasm. In terms of biological role, does not inhibit strain RB-1 of the fish pathogen, infectious hematopoietic necrosis virus (IHNV). The polypeptide is Interferon-induced GTP-binding protein Mx2 (Oncorhynchus mykiss (Rainbow trout)).